Consider the following 395-residue polypeptide: Na(+)/H(+) antiporter NhaA (395 aa).

Transmembrane regions (helical) follow at residues 11–31, 61–81, 96–116, 127–147, 156–176, 179–199, 202–222, 264–284, 295–315, 331–351, and 366–386; these read FAME…ALII, LLLW…GLEV, IVLP…IYWF, GWAI…ALLG, LFLM…IAIF, GTLS…LVAM, MGVV…VCVL, FGIL…GVTL, IAVG…WMAV, VLGV…VGSL, and MGIL…TAAA.

It belongs to the NhaA Na(+)/H(+) (TC 2.A.33) antiporter family.

It localises to the cell inner membrane. The enzyme catalyses Na(+)(in) + 2 H(+)(out) = Na(+)(out) + 2 H(+)(in). In terms of biological role, na(+)/H(+) antiporter that extrudes sodium in exchange for external protons. The polypeptide is Na(+)/H(+) antiporter NhaA (Pseudomonas fluorescens (strain ATCC BAA-477 / NRRL B-23932 / Pf-5)).